We begin with the raw amino-acid sequence, 664 residues long: Transketolase 1 (664 aa).

His26 is a substrate binding site. Thiamine diphosphate contacts are provided by residues His66 and 114 to 116; that span reads GPL. Asp155 is a binding site for Mg(2+). Positions 156 and 185 each coordinate thiamine diphosphate. 2 residues coordinate Mg(2+): Asn185 and Ile187. Residues His260, Arg357, and Ser384 each coordinate substrate. Residue His260 participates in thiamine diphosphate binding. Glu411 functions as the Proton donor in the catalytic mechanism. Phe437 contributes to the thiamine diphosphate binding site. His461, Asp469, and Arg520 together coordinate substrate.

This sequence belongs to the transketolase family. As to quaternary structure, homodimer. Requires Mg(2+) as cofactor. Ca(2+) is required as a cofactor. It depends on Mn(2+) as a cofactor. The cofactor is Co(2+). Thiamine diphosphate serves as cofactor.

The catalysed reaction is D-sedoheptulose 7-phosphate + D-glyceraldehyde 3-phosphate = aldehydo-D-ribose 5-phosphate + D-xylulose 5-phosphate. Catalyzes the transfer of a two-carbon ketol group from a ketose donor to an aldose acceptor, via a covalent intermediate with the cofactor thiamine pyrophosphate. This Vibrio vulnificus (strain YJ016) protein is Transketolase 1 (tkt1).